A 594-amino-acid chain; its full sequence is UvrABC system protein C (594 aa).

The GIY-YIG domain maps to 13–99 (HSSGVYQYFD…IKQLKPKYNI (87 aa)). The UVR domain maps to 205–240 (DKLIKELELKMERLSNNLRFEEALIYRDRIAKIQKI).

Belongs to the UvrC family. As to quaternary structure, interacts with UvrB in an incision complex.

Its subcellular location is the cytoplasm. Its function is as follows. The UvrABC repair system catalyzes the recognition and processing of DNA lesions. UvrC both incises the 5' and 3' sides of the lesion. The N-terminal half is responsible for the 3' incision and the C-terminal half is responsible for the 5' incision. The protein is UvrABC system protein C of Helicobacter pylori (strain HPAG1).